Reading from the N-terminus, the 97-residue chain is Ribosomal biogenesis factor (97 aa).

Serine 19 carries the post-translational modification Phosphoserine. An N6-acetyllysine modification is found at lysine 21. A Phosphoserine modification is found at serine 69.

In terms of assembly, associates with the pre-60S ribosomal particles.

It is found in the nucleus. It localises to the nucleolus. Functionally, trans-acting factor in ribosome biogenesis required for efficient 40S and 60S subunit production. This is Ribosomal biogenesis factor (Rbis) from Mus musculus (Mouse).